The primary structure comprises 551 residues: uncharacterized protein (551 aa).

Disordered stretches follow at residues 66 to 111, 130 to 165, 180 to 229, and 277 to 303; these read GNNK…STNL, PEAT…EKSN, AFNP…LSNL, and AFTS…VPLS. The residue at position 74 (serine 74) is a Phosphoserine. Composition is skewed to polar residues over residues 92–111 and 143–156; these read GFSN…STNL and VVNT…GTQE. Positions 182–193 are enriched in low complexity; sequence NPSSVLPSNSSS. Residues 204-226 show a composition bias toward polar residues; it reads KETYQPNTFRRSPLKNDTGSVEL. The span at 290-299 shows a compositional bias: low complexity; it reads TRPSSTRFPS.

This is an uncharacterized protein from Schizosaccharomyces pombe (strain 972 / ATCC 24843) (Fission yeast).